A 167-amino-acid polypeptide reads, in one-letter code: Endoribonuclease YbeY (167 aa).

Residues H125, H129, and H135 each coordinate Zn(2+).

It belongs to the endoribonuclease YbeY family. Zn(2+) is required as a cofactor.

The protein resides in the cytoplasm. Functionally, single strand-specific metallo-endoribonuclease involved in late-stage 70S ribosome quality control and in maturation of the 3' terminus of the 16S rRNA. The chain is Endoribonuclease YbeY from Allorhizobium ampelinum (strain ATCC BAA-846 / DSM 112012 / S4) (Agrobacterium vitis (strain S4)).